Consider the following 327-residue polypeptide: Putative pumilio homolog 19 (327 aa).

The region spanning 1–324 (MAVSDNTFSM…NIANILDTFR (324 aa)) is the PUM-HD domain. Pumilio repeat units lie at residues 79 to 114 (SDSDYFMSIVTTKFGSRRVQKLLGKSDDVDAFFCAA), 115 to 149 (ILRRFLHITTDKYASYVTIRAMVVFDKVMKKALYE), 150 to 185 (RILYHALDLACDQHGCIALNDIITDADDPYYRDQLL), 186 to 222 (ELVVSNALRLSNDASGNFVVQHVLTLYDSRCIHNIAV), 223 to 260 (NLYGQCIELSFKKYGSYIVEKLLEVEESMVVVVVELLG), and 261 to 295 (CDGDRLMRLARNEFGNFVVVKALRFTKEMRMDLFW).

The protein resides in the cytoplasm. Its function is as follows. Sequence-specific RNA-binding protein that regulates translation and mRNA stability by binding the 3'-UTR of target mRNAs. This is Putative pumilio homolog 19 (APUM19) from Arabidopsis thaliana (Mouse-ear cress).